The chain runs to 81 residues: Acyl carrier protein (81 aa).

The Carrier domain maps to 4–79 (SEIFGKVKDI…AAVDFIAGKV (76 aa)). Position 39 is an O-(pantetheine 4'-phosphoryl)serine (Ser-39).

This sequence belongs to the acyl carrier protein (ACP) family. Post-translationally, 4'-phosphopantetheine is transferred from CoA to a specific serine of apo-ACP by AcpS. This modification is essential for activity because fatty acids are bound in thioester linkage to the sulfhydryl of the prosthetic group.

It localises to the cytoplasm. It functions in the pathway lipid metabolism; fatty acid biosynthesis. Functionally, carrier of the growing fatty acid chain in fatty acid biosynthesis. The protein is Acyl carrier protein of Acaryochloris marina (strain MBIC 11017).